Here is a 298-residue protein sequence, read N- to C-terminus: Ribose-phosphate pyrophosphokinase (298 aa).

Residues 33 to 35 (DGE) and 91 to 92 (RQ) each bind ATP. Mg(2+) contacts are provided by His-125 and Asp-164. Lys-187 is a catalytic residue. D-ribose 5-phosphate-binding residues include Arg-189 and Asp-224.

The protein belongs to the ribose-phosphate pyrophosphokinase family. Class III (archaeal) subfamily. It depends on Mg(2+) as a cofactor.

The protein localises to the cytoplasm. It carries out the reaction D-ribose 5-phosphate + ATP = 5-phospho-alpha-D-ribose 1-diphosphate + AMP + H(+). Its pathway is metabolic intermediate biosynthesis; 5-phospho-alpha-D-ribose 1-diphosphate biosynthesis; 5-phospho-alpha-D-ribose 1-diphosphate from D-ribose 5-phosphate (route I): step 1/1. Involved in the biosynthesis of the central metabolite phospho-alpha-D-ribosyl-1-pyrophosphate (PRPP) via the transfer of pyrophosphoryl group from ATP to 1-hydroxyl of ribose-5-phosphate (Rib-5-P). The chain is Ribose-phosphate pyrophosphokinase from Methanobrevibacter smithii (strain ATCC 35061 / DSM 861 / OCM 144 / PS).